We begin with the raw amino-acid sequence, 467 residues long: ATP-dependent protease ATPase subunit HslU (467 aa).

ATP contacts are provided by residues valine 22 and 64–69 (GVGKTE). Positions 166 to 185 (GQNQDEEEEPPTEEIKTKRS) are disordered. ATP is bound by residues aspartate 280, glutamate 345, and arginine 417.

This sequence belongs to the ClpX chaperone family. HslU subfamily. In terms of assembly, a double ring-shaped homohexamer of HslV is capped on each side by a ring-shaped HslU homohexamer. The assembly of the HslU/HslV complex is dependent on binding of ATP.

The protein resides in the cytoplasm. Functionally, ATPase subunit of a proteasome-like degradation complex; this subunit has chaperone activity. The binding of ATP and its subsequent hydrolysis by HslU are essential for unfolding of protein substrates subsequently hydrolyzed by HslV. HslU recognizes the N-terminal part of its protein substrates and unfolds these before they are guided to HslV for hydrolysis. In Staphylococcus epidermidis (strain ATCC 35984 / DSM 28319 / BCRC 17069 / CCUG 31568 / BM 3577 / RP62A), this protein is ATP-dependent protease ATPase subunit HslU.